The chain runs to 101 residues: MNSIRKLSCFGTGSSIYSGKCLSSTQQKGLPQRTLWTMNGLIWAYWMMVLQLIIIPKDSGCSRSTFLFFFSHLLLVPFFFFLTLLFHFPVFNNISLNFYIQ.

The next 2 membrane-spanning stretches (helical) occupy residues 35–55 (LWTM…LIII) and 66–86 (FLFF…TLLF).

It localises to the membrane. This is an uncharacterized protein from Saccharomyces cerevisiae (strain ATCC 204508 / S288c) (Baker's yeast).